We begin with the raw amino-acid sequence, 328 residues long: Homeobox protein Hox-D1 (328 aa).

An Antp-type hexapeptide motif is present at residues 204–209; that stretch reads TFEWMK. Positions 229–288 form a DNA-binding region, homeobox; the sequence is SSAIRTNFSTKQLTELEKEFHFNKYLTRARRIEIANCLHLNDTQVKIWFQNRRMKQKKRE. Residues 305-328 are disordered; sequence PLSGTTPTKFIKNPGSPSQSQEPS. The segment covering 319–328 has biased composition (polar residues); the sequence is GSPSQSQEPS.

It belongs to the Antp homeobox family. Labial subfamily.

It is found in the nucleus. Its function is as follows. Sequence-specific transcription factor which is part of a developmental regulatory system that provides cells with specific positional identities on the anterior-posterior axis. Acts on the anterior body structures. This chain is Homeobox protein Hox-D1 (HOXD1), found in Homo sapiens (Human).